Reading from the N-terminus, the 399-residue chain is Acetate kinase (399 aa).

Asparagine 10 contributes to the Mg(2+) binding site. Residue lysine 17 participates in ATP binding. Substrate is bound at residue arginine 91. Residue aspartate 148 is the Proton donor/acceptor of the active site. Residues 208–212, 283–285, and 331–335 each bind ATP; these read HLGNG, DCR, and GIGEN. A Mg(2+)-binding site is contributed by glutamate 385.

The protein belongs to the acetokinase family. In terms of assembly, homodimer. It depends on Mg(2+) as a cofactor. Requires Mn(2+) as cofactor.

The protein resides in the cytoplasm. The enzyme catalyses acetate + ATP = acetyl phosphate + ADP. The protein operates within metabolic intermediate biosynthesis; acetyl-CoA biosynthesis; acetyl-CoA from acetate: step 1/2. Catalyzes the formation of acetyl phosphate from acetate and ATP. Can also catalyze the reverse reaction. This chain is Acetate kinase, found in Shewanella amazonensis (strain ATCC BAA-1098 / SB2B).